The sequence spans 464 residues: Cytoplasmic tRNA 2-thiolation protein 2 (464 aa).

This sequence belongs to the CTU2/NCS2 family.

It localises to the cytoplasm. The protein operates within tRNA modification; 5-methoxycarbonylmethyl-2-thiouridine-tRNA biosynthesis. Functionally, plays a central role in 2-thiolation of mcm(5)S(2)U at tRNA wobble positions of tRNA(Lys), tRNA(Glu) and tRNA(Gln). May act by forming a heterodimer with NCS6/CTU1 that ligates sulfur from thiocarboxylated URM1 onto the uridine of tRNAs at wobble position. This chain is Cytoplasmic tRNA 2-thiolation protein 2, found in Oryza sativa subsp. indica (Rice).